The following is a 188-amino-acid chain: Kininogen (188 aa).

Residues N36, N150, and N182 are each glycosylated (N-linked (GlcNAc...) asparagine).

Post-translationally, bradykinin is released from kininogen by kallikrein. In terms of processing, N-glycosylated. Contains O-acetylated sialic acids as terminal elements on biantennary and triantennary N-glycans.

Inhibits papain and ficin (cysteine proteinases) but not trypsin (a serine proteinase). The polypeptide is Kininogen (Anarhichas minor (Arctic spotted wolffish)).